Here is a 319-residue protein sequence, read N- to C-terminus: Protease HtpX homolog (319 aa).

2 helical membrane-spanning segments follow: residues threonine 6–glycine 26 and glycine 28–serine 48. Histidine 130 contributes to the Zn(2+) binding site. The active site involves glutamate 131. Histidine 134 is a Zn(2+) binding site. Helical transmembrane passes span leucine 145–glycine 165 and proline 172–valine 192. Residue glutamate 201 participates in Zn(2+) binding. The disordered stretch occupies residues arginine 279–serine 319.

It belongs to the peptidase M48B family. Zn(2+) is required as a cofactor.

It is found in the cell inner membrane. The polypeptide is Protease HtpX homolog (Sinorhizobium fredii (strain NBRC 101917 / NGR234)).